The chain runs to 176 residues: Outer membrane protein assembly factor BamE (176 aa).

The first 21 residues, 1–21 (MQNAKLMLTCLAFAGLAALAG), serve as a signal peptide directing secretion. Residue cysteine 22 is the site of N-palmitoyl cysteine attachment. The S-diacylglycerol cysteine moiety is linked to residue cysteine 22. Positions 121 to 176 (KEGSTTVTQPADQQKPEAQKEEPPKPGSTLEQLQREVDEAQPVPVPTPEPLDPSPQ) are disordered. Polar residues predominate over residues 123–132 (GSTTVTQPAD). The segment covering 134 to 144 (QKPEAQKEEPP) has biased composition (basic and acidic residues). A compositionally biased stretch (pro residues) spans 163 to 176 (VPVPTPEPLDPSPQ).

Belongs to the BamE family. As to quaternary structure, part of the Bam complex.

The protein localises to the cell outer membrane. Its function is as follows. Part of the outer membrane protein assembly complex, which is involved in assembly and insertion of beta-barrel proteins into the outer membrane. May have a structural role in maintaining the cell envelope integrity. This chain is Outer membrane protein assembly factor BamE, found in Pseudomonas aeruginosa (strain ATCC 15692 / DSM 22644 / CIP 104116 / JCM 14847 / LMG 12228 / 1C / PRS 101 / PAO1).